The primary structure comprises 290 residues: NAD kinase (290 aa).

Asp72 (proton acceptor) is an active-site residue. NAD(+) contacts are provided by residues 72–73 (DG), 146–147 (NE), Arg174, Asp176, and 187–192 (TAYALS).

This sequence belongs to the NAD kinase family. A divalent metal cation serves as cofactor.

The protein localises to the cytoplasm. It carries out the reaction NAD(+) + ATP = ADP + NADP(+) + H(+). Functionally, involved in the regulation of the intracellular balance of NAD and NADP, and is a key enzyme in the biosynthesis of NADP. Catalyzes specifically the phosphorylation on 2'-hydroxyl of the adenosine moiety of NAD to yield NADP. This is NAD kinase from Methylococcus capsulatus (strain ATCC 33009 / NCIMB 11132 / Bath).